The following is a 163-amino-acid chain: Glyoxalase domain-containing protein 5 (163 aa).

The VOC domain occupies 41 to 161 (HLDHLVLTVR…DDNLIEVSNY (121 aa)).

Belongs to the glyoxalase I family.

The polypeptide is Glyoxalase domain-containing protein 5 (glod5) (Danio rerio (Zebrafish)).